We begin with the raw amino-acid sequence, 515 residues long: MDEFHRCGKEDSFWQQCFLYPLFFKEDLYAISHDHYLDVSSSSRPMEHLSSNDQLSFLTVKRLIGQIRKQNHSIVLFVNCDPNPLADRKKSFYSESVLEALTLVLEVPFSIWSKYSVEGMNESKSFRSIHSIFPFLEDKFPHSNSILDARIPYSIHPEILVRTFRRWIRDAPSLHPLRSVLYEYRNSTENLQRSIIVVPRVNTRFFLFLWNYYVCECESILFSRLKRSSHSRSLSHGSFPQRTHFHRKIKHIIIFSRRNSLKSIWSLKDPKIHYVRYGERPIIAIKGAHLLVKKCRYYLLIFRQFYFHLWSEPYRVCSHQLSKNCSSSPGYFLRVRMNPILVRTKMLDELFIADLITDEIDPIVPIVPIIGLLATEKFCDISGRPISKLSWTSLTDDDILDRFDQIWRNLFHYYSGSFDRDGLYRIKYILSLSCAKTLACKHKSTIRVVRKELGPELFKKSFSKEREFDSLRFSSKAAARSQRERIWHSDIPQINPLANSWQKIQDLKIENLFDQ.

This sequence belongs to the intron maturase 2 family. MatK subfamily.

Its subcellular location is the plastid. The protein localises to the chloroplast. In terms of biological role, usually encoded in the trnK tRNA gene intron. Probably assists in splicing its own and other chloroplast group II introns. The sequence is that of Maturase K from Pinus clausa (Sand pine).